The chain runs to 268 residues: Tryptophan synthase alpha chain (268 aa).

Active-site proton acceptor residues include E49 and D60.

The protein belongs to the TrpA family. Tetramer of two alpha and two beta chains.

It carries out the reaction (1S,2R)-1-C-(indol-3-yl)glycerol 3-phosphate + L-serine = D-glyceraldehyde 3-phosphate + L-tryptophan + H2O. It functions in the pathway amino-acid biosynthesis; L-tryptophan biosynthesis; L-tryptophan from chorismate: step 5/5. Functionally, the alpha subunit is responsible for the aldol cleavage of indoleglycerol phosphate to indole and glyceraldehyde 3-phosphate. This chain is Tryptophan synthase alpha chain, found in Mannheimia succiniciproducens (strain KCTC 0769BP / MBEL55E).